A 77-amino-acid polypeptide reads, in one-letter code: NAD(P)H-quinone oxidoreductase subunit L (77 aa).

A run of 2 helical transmembrane segments spans residues 12–32 (LVAY…ILFY) and 47–67 (LIVY…SPFL).

It belongs to the complex I NdhL subunit family. NDH-1 can be composed of about 15 different subunits; different subcomplexes with different compositions have been identified which probably have different functions.

The protein localises to the cellular thylakoid membrane. The enzyme catalyses a plastoquinone + NADH + (n+1) H(+)(in) = a plastoquinol + NAD(+) + n H(+)(out). The catalysed reaction is a plastoquinone + NADPH + (n+1) H(+)(in) = a plastoquinol + NADP(+) + n H(+)(out). In terms of biological role, NDH-1 shuttles electrons from an unknown electron donor, via FMN and iron-sulfur (Fe-S) centers, to quinones in the respiratory and/or the photosynthetic chain. The immediate electron acceptor for the enzyme in this species is believed to be plastoquinone. Couples the redox reaction to proton translocation, and thus conserves the redox energy in a proton gradient. Cyanobacterial NDH-1 also plays a role in inorganic carbon-concentration. This is NAD(P)H-quinone oxidoreductase subunit L from Prochlorococcus marinus subsp. pastoris (strain CCMP1986 / NIES-2087 / MED4).